We begin with the raw amino-acid sequence, 209 residues long: Large ribosomal subunit protein uL4 (209 aa).

The disordered stretch occupies residues 45 to 80 (RQGTHKAKERSELSGSTRKLIRQKGSGGARRGDINS).

This sequence belongs to the universal ribosomal protein uL4 family. Part of the 50S ribosomal subunit.

One of the primary rRNA binding proteins, this protein initially binds near the 5'-end of the 23S rRNA. It is important during the early stages of 50S assembly. It makes multiple contacts with different domains of the 23S rRNA in the assembled 50S subunit and ribosome. Its function is as follows. Forms part of the polypeptide exit tunnel. The chain is Large ribosomal subunit protein uL4 from Porphyromonas gingivalis (strain ATCC BAA-308 / W83).